Consider the following 92-residue polypeptide: Protein S100-B (92 aa).

Position 2 is a blocked amino end (Ser); alternate (S2). Position 2 is an N-acetylserine; alternate (S2). 2 consecutive EF-hand domains span residues 13 to 48 (DVFHQYSGREGDKHKLKKSELKELINNELSHFLEEI) and 49 to 84 (KEQEVVDKVMETLDNDGDGECDFQEFMAFVAMVTTA). H16 contributes to the Zn(2+) binding site. Ca(2+) is bound by residues S19, E22, and D24. H26 serves as a coordination point for Zn(2+). Residues K27, E32, D62, D64, D66, E68, and E73 each contribute to the Ca(2+) site. The Zn(2+) site is built by H86 and H91.

It belongs to the S-100 family. In terms of assembly, dimer of either two alpha chains, or two beta chains, or one alpha and one beta chain. The S100B dimer binds two molecules of STK38. Interacts with CACYBP in a calcium-dependent manner. Interacts with ATAD3A; this interaction probably occurs in the cytosol prior to ATAD3A mitochondrial targeting. Interacts with S100A6. The S100B dimer interacts with two molecules of CAPZA1. Interacts with AGER. Interacts with PPP5C (via TPR repeats); the interaction is calcium-dependent and modulates PPP5C activity. Interacts with TPPP; this interaction inhibits TPPP dimerization. Interacts with isoform CLSTN3beta of CLSTN3; interaction promotes secretion. In terms of tissue distribution, although predominant among the water-soluble brain proteins, S100 is also found in a variety of other tissues.

The protein resides in the cytoplasm. The protein localises to the nucleus. It localises to the secreted. Its function is as follows. Small zinc- and- and calcium-binding protein that is highly expressed in astrocytes and constitutes one of the most abundant soluble proteins in brain. Weakly binds calcium but binds zinc very tightly-distinct binding sites with different affinities exist for both ions on each monomer. Physiological concentrations of potassium ion antagonize the binding of both divalent cations, especially affecting high-affinity calcium-binding sites. Acts as a neurotrophic factor that promotes astrocytosis and axonal proliferation. Involved in innervation of thermogenic adipose tissue by acting as an adipocyte-derived neurotrophic factor that promotes sympathetic innervation of adipose tissue. Binds to and initiates the activation of STK38 by releasing autoinhibitory intramolecular interactions within the kinase. Interaction with AGER after myocardial infarction may play a role in myocyte apoptosis by activating ERK1/2 and p53/TP53 signaling. Could assist ATAD3A cytoplasmic processing, preventing aggregation and favoring mitochondrial localization. May mediate calcium-dependent regulation on many physiological processes by interacting with other proteins, such as TPR-containing proteins, and modulating their activity. The polypeptide is Protein S100-B (Homo sapiens (Human)).